Consider the following 235-residue polypeptide: Venom metalloproteinase antarease-like TserMP_B (235 aa).

The 230-residue stretch at 4-233 folds into the Peptidase M12B domain; that stretch reads IVVEYYIVTD…PTASCIFQQC (230 aa). An intrachain disulfide couples C137 to C228. H161 is a Zn(2+) binding site. The active site involves E162. Zn(2+) is bound by residues H165 and H171.

The protein belongs to the venom metalloproteinase (M12B) family. The cofactor is Zn(2+). In terms of tissue distribution, expressed by the venom gland.

It is found in the secreted. With respect to regulation, inhibited by EDTA. Its function is as follows. Acts as a metalloprotease. Penetrates intact tissue and specifically cleaves the vesicle-associated membrane protein 2 (VAMP2) (part of the SNARE complex) involved in pancreatic secretion, thus disrupting the normal vesicular traffic. This is Venom metalloproteinase antarease-like TserMP_B from Tityus serrulatus (Brazilian scorpion).